We begin with the raw amino-acid sequence, 202 residues long: Dephospho-CoA kinase (202 aa).

Residues 6–202 form the DPCK domain; the sequence is KISVTGDPSS…QCFKALKGTI (197 aa). 14–19 lines the ATP pocket; it reads SSGKTE.

It belongs to the CoaE family.

It is found in the cytoplasm. It carries out the reaction 3'-dephospho-CoA + ATP = ADP + CoA + H(+). Its pathway is cofactor biosynthesis; coenzyme A biosynthesis; CoA from (R)-pantothenate: step 5/5. Catalyzes the phosphorylation of the 3'-hydroxyl group of dephosphocoenzyme A to form coenzyme A. The protein is Dephospho-CoA kinase of Chlamydia muridarum (strain MoPn / Nigg).